The chain runs to 183 residues: Glutathione-regulated potassium-efflux system ancillary protein KefG (183 aa).

The protein belongs to the NAD(P)H dehydrogenase (quinone) family. KefG subfamily. Interacts with KefB.

It is found in the cell inner membrane. The catalysed reaction is a quinone + NADH + H(+) = a quinol + NAD(+). It carries out the reaction a quinone + NADPH + H(+) = a quinol + NADP(+). In terms of biological role, regulatory subunit of a potassium efflux system that confers protection against electrophiles. Required for full activity of KefB. This chain is Glutathione-regulated potassium-efflux system ancillary protein KefG, found in Yersinia pestis bv. Antiqua (strain Angola).